The primary structure comprises 217 residues: 3-demethoxyubiquinol 3-hydroxylase (217 aa).

Fe cation-binding residues include Glu-66, Glu-96, His-99, Glu-148, Glu-180, and His-183.

It belongs to the COQ7 family. Fe cation serves as cofactor.

The protein resides in the cell membrane. It catalyses the reaction a 5-methoxy-2-methyl-3-(all-trans-polyprenyl)benzene-1,4-diol + AH2 + O2 = a 3-demethylubiquinol + A + H2O. Its pathway is cofactor biosynthesis; ubiquinone biosynthesis. Its function is as follows. Catalyzes the hydroxylation of 2-nonaprenyl-3-methyl-6-methoxy-1,4-benzoquinol during ubiquinone biosynthesis. This is 3-demethoxyubiquinol 3-hydroxylase from Xanthomonas campestris pv. campestris (strain 8004).